The chain runs to 367 residues: uncharacterized protein (367 aa).

The protein resides in the mitochondrion. This is an uncharacterized protein from Paramecium tetraurelia.